Here is a 261-residue protein sequence, read N- to C-terminus: Transcription factor BEE 3 (261 aa).

Residues 72-82 are compositionally biased toward low complexity; it reads NIQNNEESSSQ. Disordered stretches follow at residues 72–158 and 242–261; these read NIQN…TDSH and VEMG…SWTL. Residues 95-123 show a composition bias toward polar residues; it reads VSTSENSVSDQTLSTSSAQVSINGNISTK. Over residues 135–146 the composition is skewed to basic and acidic residues; it reads NREEEKEREVVH. One can recognise a bHLH domain in the interval 153-203; that stretch reads QATDSHSIAERVRRGKINERLKCLQDIVPGCYKTMGMATMLDEIINYVQSL.

As to quaternary structure, homodimer. As to expression, expressed in stems.

It is found in the nucleus. Functionally, positive regulator of brassinosteroid signaling. This is Transcription factor BEE 3 (BEE3) from Arabidopsis thaliana (Mouse-ear cress).